A 507-amino-acid polypeptide reads, in one-letter code: Steroid 17-alpha-hydroxylase/17,20 lyase (507 aa).

C441 lines the heme pocket.

Belongs to the cytochrome P450 family. The cofactor is heme.

Its subcellular location is the endoplasmic reticulum membrane. The protein localises to the microsome membrane. It catalyses the reaction a C21-steroid + reduced [NADPH--hemoprotein reductase] + O2 = a 17alpha-hydroxy-C21-steroid + oxidized [NADPH--hemoprotein reductase] + H2O + H(+). It carries out the reaction progesterone + reduced [NADPH--hemoprotein reductase] + O2 = 17alpha-hydroxyprogesterone + oxidized [NADPH--hemoprotein reductase] + H2O + H(+). The catalysed reaction is pregnenolone + reduced [NADPH--hemoprotein reductase] + O2 = 17alpha-hydroxypregnenolone + oxidized [NADPH--hemoprotein reductase] + H2O + H(+). The enzyme catalyses 17alpha-hydroxyprogesterone + reduced [NADPH--hemoprotein reductase] + O2 = androst-4-ene-3,17-dione + acetate + oxidized [NADPH--hemoprotein reductase] + H2O + 2 H(+). It catalyses the reaction 17alpha-hydroxyprogesterone + reduced [NADPH--hemoprotein reductase] + O2 = 16alpha,17alpha-dihydroxyprogesterone + oxidized [NADPH--hemoprotein reductase] + H2O + H(+). It carries out the reaction 16alpha,17alpha-dihydroxyprogesterone + reduced [NADPH--hemoprotein reductase] + O2 = 6beta,16alpha,17alpha-trihydroxyprogesterone + oxidized [NADPH--hemoprotein reductase] + H2O + H(+). The catalysed reaction is 17alpha-hydroxypregnenolone + reduced [NADPH--hemoprotein reductase] + O2 = 3beta-hydroxyandrost-5-en-17-one + acetate + oxidized [NADPH--hemoprotein reductase] + H2O + 2 H(+). The enzyme catalyses 16alpha,17alpha-dihydroxypregnenolone + reduced [NADPH--hemoprotein reductase] + O2 = 3beta,16alpha-dihydroxy-androst-5-en-17-one + acetate + oxidized [NADPH--hemoprotein reductase] + H2O + 2 H(+). It catalyses the reaction 3beta-hydroxyandrost-5-en-17-one + reduced [NADPH--hemoprotein reductase] + O2 = 3beta,16alpha-dihydroxy-androst-5-en-17-one + oxidized [NADPH--hemoprotein reductase] + H2O + H(+). It carries out the reaction androst-4-ene-3,17-dione + reduced [NADPH--hemoprotein reductase] + O2 = 16alpha-hydroxyandrost-4-ene-3,17-dione + oxidized [NADPH--hemoprotein reductase] + H2O + H(+). It functions in the pathway steroid hormone biosynthesis. It participates in steroid biosynthesis; glucocorticoid biosynthesis. With respect to regulation, regulated predominantly by intracellular cAMP levels. The 17,20-lyase activity is stimulated by cytochrome b5, which acts as an allosteric effector increasing the Vmax of the lyase activity. In terms of biological role, a cytochrome P450 monooxygenase involved in corticoid and androgen biosynthesis. Catalyzes 17-alpha hydroxylation of C21 steroids, which is common for both pathways. A second oxidative step, required only for androgen synthesis, involves an acyl-carbon cleavage. The 17-alpha hydroxy intermediates, as part of adrenal glucocorticoids biosynthesis pathway, are precursors of cortisol. Hydroxylates steroid hormones, pregnenolone and progesterone to form 17-alpha hydroxy metabolites, followed by the cleavage of the C17-C20 bond to form C19 steroids, dehydroepiandrosterone (DHEA) and androstenedione. Has 16-alpha hydroxylase activity. Catalyzes 16-alpha hydroxylation of 17-alpha hydroxy pregnenolone, followed by the cleavage of the C17-C20 bond to form 16-alpha-hydroxy DHEA. Also 16-alpha hydroxylates androgens, relevant for estriol synthesis. Mechanistically, uses molecular oxygen inserting one oxygen atom into a substrate, and reducing the second into a water molecule, with two electrons provided by NADPH via cytochrome P450 reductase (CPR; NADPH-ferrihemoprotein reductase). The chain is Steroid 17-alpha-hydroxylase/17,20 lyase (Cyp17a1) from Rattus norvegicus (Rat).